We begin with the raw amino-acid sequence, 243 residues long: Pyridoxine 5'-phosphate synthase (243 aa).

N9 is a 3-amino-2-oxopropyl phosphate binding site. 1-deoxy-D-xylulose 5-phosphate is bound at residue 11-12 (DH). R20 contributes to the 3-amino-2-oxopropyl phosphate binding site. The active-site Proton acceptor is H45. The 1-deoxy-D-xylulose 5-phosphate site is built by R47 and H52. E72 functions as the Proton acceptor in the catalytic mechanism. Position 102 (T102) interacts with 1-deoxy-D-xylulose 5-phosphate. Catalysis depends on H193, which acts as the Proton donor. 3-amino-2-oxopropyl phosphate is bound by residues G194 and 215-216 (GH).

This sequence belongs to the PNP synthase family. Homooctamer; tetramer of dimers.

It is found in the cytoplasm. The catalysed reaction is 3-amino-2-oxopropyl phosphate + 1-deoxy-D-xylulose 5-phosphate = pyridoxine 5'-phosphate + phosphate + 2 H2O + H(+). The protein operates within cofactor biosynthesis; pyridoxine 5'-phosphate biosynthesis; pyridoxine 5'-phosphate from D-erythrose 4-phosphate: step 5/5. Catalyzes the complicated ring closure reaction between the two acyclic compounds 1-deoxy-D-xylulose-5-phosphate (DXP) and 3-amino-2-oxopropyl phosphate (1-amino-acetone-3-phosphate or AAP) to form pyridoxine 5'-phosphate (PNP) and inorganic phosphate. The chain is Pyridoxine 5'-phosphate synthase from Aliivibrio fischeri (strain ATCC 700601 / ES114) (Vibrio fischeri).